A 362-amino-acid chain; its full sequence is Chemerin-like receptor 1 (362 aa).

Residues 1–37 (MEAEDYNASYEDYPDDVDPIVVLEELSPLEGRVVRIL) are Extracellular-facing. A glycan (N-linked (GlcNAc...) asparagine) is linked at asparagine 7. Residues 38-58 (LVAVYSVICLLGILGNGLVIV) traverse the membrane as a helical segment. Residues 59–70 (MITCKMKRTVNT) are Cytoplasmic-facing. Residues 71 to 91 (VWFLNLAVADFLFNVFLPVHI) traverse the membrane as a helical segment. Residues 92 to 108 (AYAALDYHWVFGTAMCK) are Extracellular-facing. A disulfide bridge links cysteine 107 with cysteine 184. Residues 109–129 (ISNFLLIHNMFTSVFLLTVIS) traverse the membrane as a helical segment. Residues 130–151 (FDRCVSVLLPVWSQNHRSVRLA) are Cytoplasmic-facing. A helical membrane pass occupies residues 152–172 (YTACLVIWVLAFFLSSPSLVF). Topologically, residues 173–219 (RDTARLHGKISCFNNFSLSAAVSSPWPAHPQVDPVGSGRHKVVTITR) are extracellular. N-linked (GlcNAc...) asparagine glycosylation occurs at asparagine 187. Residues 220–240 (FLCGFLVPGLITTACYLTIVY) traverse the membrane as a helical segment. Topologically, residues 241–255 (KLQRSRLAKTKKPFK) are cytoplasmic. The chain crosses the membrane as a helical span at residues 256–276 (IILTIIVTFFLCWCPYHAFYL). Residues 277-281 (LELRR) lie on the Extracellular side of the membrane. The chain crosses the membrane as a helical span at residues 282-302 (GSVPPSVFSLGVPLATAIAIA). The Cytoplasmic segment spans residues 303–362 (NSCMNPILYVFMGQDFKKFRVALFSRLVNALSEDTGHSSYPSHRSFTKMSSMNERETGML). The residue at position 334 (serine 334) is a Phosphoserine. Residues 336–362 (DTGHSSYPSHRSFTKMSSMNERETGML) are disordered. A Phosphothreonine modification is found at threonine 337. Residues 339–354 (HSSYPSHRSFTKMSSM) show a composition bias toward polar residues. Phosphoserine is present on residues serine 344, serine 347, and serine 353.

The protein belongs to the chemokine-like receptor (CMKLR) family. Widely expressed in several tissues including adipose, muscle, liver and brain.

The protein resides in the cell membrane. Receptor for the chemoattractant adipokine chemerin/RARRES2 and for the omega-3 fatty acid derived molecule resolvin E1. Interaction with RARRES2 initiates activation of G proteins G(i)/G(o) and beta-arrestin pathways inducing cellular responses via second messenger pathways such as intracellular calcium mobilization, phosphorylation of MAP kinases MAPK1/MAPK3 (ERK1/2), TYRO3, MAPK14/P38MAPK and PI3K leading to multifunctional effects, like, reduction of immune responses, enhancing of adipogenesis and angionesis. Resolvin E1 down-regulates cytokine production in macrophages by reducing the activation of MAPK1/3 (ERK1/2) and NF-kappa-B. Positively regulates adipogenesis and adipocyte metabolism. This Bos taurus (Bovine) protein is Chemerin-like receptor 1 (CMLKR1).